The sequence spans 228 residues: L-ribulose-5-phosphate 4-epimerase UlaF (228 aa).

Residues G26–N27, S43–G44, and S72–S73 contribute to the substrate site. Residues D74, H93, and H95 each coordinate Zn(2+). D118 (proton donor/acceptor) is an active-site residue. A Zn(2+)-binding site is contributed by H167. Catalysis depends on Y225, which acts as the Proton donor/acceptor.

It belongs to the aldolase class II family. AraD/FucA subfamily. Zn(2+) is required as a cofactor.

It carries out the reaction L-ribulose 5-phosphate = D-xylulose 5-phosphate. The protein operates within cofactor degradation; L-ascorbate degradation; D-xylulose 5-phosphate from L-ascorbate: step 4/4. Catalyzes the isomerization of L-ribulose 5-phosphate to D-xylulose 5-phosphate. Is involved in the anaerobic L-ascorbate utilization. This chain is L-ribulose-5-phosphate 4-epimerase UlaF, found in Salmonella choleraesuis (strain SC-B67).